A 605-amino-acid chain; its full sequence is Anaerobic ribonucleoside-triphosphate reductase (605 aa).

Residues His64 and His66 each coordinate dCTP. DGTP-binding residues include His64, His66, Asp67, Glu100, and Lys103. Residues Glu100, Lys103, Gln114, Lys146, and 445–448 each bind dCTP; that span reads AENL. DATP-binding residues include Glu100, Lys103, Gln114, and Lys146. A dTTP-binding site is contributed by Glu100. DTTP is bound by residues Gln114 and Lys146. The dGTP site is built by Lys146, Asn447, and Leu448. The Glycine radical domain occupies 482–605; it reads ENITPFEKIS…KEIMHRVKHQ (124 aa). Zn(2+) is bound by residues Cys543, Cys546, Cys561, and Cys564. Gly580 bears the Glycine radical mark.

This sequence belongs to the anaerobic ribonucleoside-triphosphate reductase family. In terms of assembly, homodimer. Forms a tetramer composed of two NrdD and two NrdG subunits.

It carries out the reaction a ribonucleoside 5'-triphosphate + formate + H(+) = a 2'-deoxyribonucleoside 5'-triphosphate + CO2 + H2O. With respect to regulation, activated under anaerobic conditions by NrdG, a tightly associated activase. Activation involves the formation of a glycyl radical at Gly-580. Functionally, catalyzes the conversion of ribonucleotides into deoxyribonucleotides, which are required for DNA synthesis and repair. The chain is Anaerobic ribonucleoside-triphosphate reductase from Enterobacteria phage T4 (Bacteriophage T4).